The following is a 776-amino-acid chain: Probable inorganic carbon transporter subunit DabA (776 aa).

Residues C313, D315, H473, and C488 each contribute to the Zn(2+) site.

The protein belongs to the inorganic carbon transporter (TC 9.A.2) DabA family. Forms a complex with DabB. It depends on Zn(2+) as a cofactor.

It localises to the cell inner membrane. In terms of biological role, part of an energy-coupled inorganic carbon pump. The chain is Probable inorganic carbon transporter subunit DabA from Chromobacterium violaceum (strain ATCC 12472 / DSM 30191 / JCM 1249 / CCUG 213 / NBRC 12614 / NCIMB 9131 / NCTC 9757 / MK).